A 589-amino-acid chain; its full sequence is UvrABC system protein C (589 aa).

The region spanning 13–90 is the GIY-YIG domain; it reads PNPGCYLFKN…IKTHTPKYNF (78 aa). The UVR domain maps to 194–229; the sequence is KDILKKLHHLMQKASEKMFYEKAQEYRDIIDSIKQT.

Belongs to the UvrC family. As to quaternary structure, interacts with UvrB in an incision complex.

It is found in the cytoplasm. Functionally, the UvrABC repair system catalyzes the recognition and processing of DNA lesions. UvrC both incises the 5' and 3' sides of the lesion. The N-terminal half is responsible for the 3' incision and the C-terminal half is responsible for the 5' incision. This chain is UvrABC system protein C, found in Aster yellows witches'-broom phytoplasma (strain AYWB).